Here is a 184-residue protein sequence, read N- to C-terminus: Der GTPase-activating protein YihI (184 aa).

Positions 1 to 107 (MNRPVKGAAD…VVAAKPTMSP (107 aa)) are disordered. The span at 21–32 (TREELEREARER) shows a compositional bias: basic and acidic residues. A compositionally biased stretch (low complexity) spans 80–95 (SAVAKPKPKSKPSAPV).

It belongs to the YihI family. Interacts with Der.

Its function is as follows. A GTPase-activating protein (GAP) that modifies Der/EngA GTPase function. May play a role in ribosome biogenesis. The polypeptide is Der GTPase-activating protein YihI (Pectobacterium carotovorum subsp. carotovorum (strain PC1)).